We begin with the raw amino-acid sequence, 261 residues long: Potassium/proton antiporter CemA (261 aa).

3 helical membrane-spanning segments follow: residues 138-158, 184-204, and 221-241; these read IISHLLTNLIGFAFISAYLIL, FLILLATDLCIGFHSPHGWEL, and IISGLVSTFPVILDTILKYWI.

Belongs to the CemA family.

It is found in the plastid. The protein resides in the chloroplast inner membrane. The catalysed reaction is K(+)(in) + H(+)(out) = K(+)(out) + H(+)(in). Its function is as follows. Contributes to K(+)/H(+) antiport activity by supporting proton efflux to control proton extrusion and homeostasis in chloroplasts in a light-dependent manner to modulate photosynthesis. Prevents excessive induction of non-photochemical quenching (NPQ) under continuous-light conditions. Indirectly promotes efficient inorganic carbon uptake into chloroplasts. In Pinus koraiensis (Korean pine), this protein is Potassium/proton antiporter CemA.